An 86-amino-acid polypeptide reads, in one-letter code: Large ribosomal subunit protein bL31 (86 aa).

It belongs to the bacterial ribosomal protein bL31 family. Type A subfamily. In terms of assembly, part of the 50S ribosomal subunit.

Its function is as follows. Binds the 23S rRNA. The protein is Large ribosomal subunit protein bL31 of Parasynechococcus marenigrum (strain WH8102).